Here is a 1384-residue protein sequence, read N- to C-terminus: DNA-directed RNA polymerase subunit beta (1384 aa).

Belongs to the RNA polymerase beta chain family. In terms of assembly, the RNAP catalytic core consists of 2 alpha, 1 beta, 1 beta' and 1 omega subunit. When a sigma factor is associated with the core the holoenzyme is formed, which can initiate transcription.

It catalyses the reaction RNA(n) + a ribonucleoside 5'-triphosphate = RNA(n+1) + diphosphate. DNA-dependent RNA polymerase catalyzes the transcription of DNA into RNA using the four ribonucleoside triphosphates as substrates. In Xylella fastidiosa (strain M12), this protein is DNA-directed RNA polymerase subunit beta.